Here is a 310-residue protein sequence, read N- to C-terminus: tRNA dimethylallyltransferase (310 aa).

11–18 (GPTAVGKT) contributes to the ATP binding site. Substrate is bound at residue 13-18 (TAVGKT). Positions 36 to 39 (DSMQ) are interaction with substrate tRNA.

The protein belongs to the IPP transferase family. In terms of assembly, monomer. Mg(2+) is required as a cofactor.

It carries out the reaction adenosine(37) in tRNA + dimethylallyl diphosphate = N(6)-dimethylallyladenosine(37) in tRNA + diphosphate. In terms of biological role, catalyzes the transfer of a dimethylallyl group onto the adenine at position 37 in tRNAs that read codons beginning with uridine, leading to the formation of N6-(dimethylallyl)adenosine (i(6)A). This is tRNA dimethylallyltransferase from Shouchella clausii (strain KSM-K16) (Alkalihalobacillus clausii).